Consider the following 476-residue polypeptide: Bifunctional protein HldE (476 aa).

The ribokinase stretch occupies residues 1–319; that stretch reads MKISLPAFEK…AALNLSHGES (319 aa). Residue 195 to 198 coordinates ATP; it reads NMSE. Aspartate 264 is an active-site residue. The tract at residues 345 to 476 is cytidylyltransferase; that stretch reads MTNGCFDILH…AIIENIMAKQ (132 aa).

It in the N-terminal section; belongs to the carbohydrate kinase PfkB family. This sequence in the C-terminal section; belongs to the cytidylyltransferase family. Homodimer.

It carries out the reaction D-glycero-beta-D-manno-heptose 7-phosphate + ATP = D-glycero-beta-D-manno-heptose 1,7-bisphosphate + ADP + H(+). The enzyme catalyses D-glycero-beta-D-manno-heptose 1-phosphate + ATP + H(+) = ADP-D-glycero-beta-D-manno-heptose + diphosphate. It participates in nucleotide-sugar biosynthesis; ADP-L-glycero-beta-D-manno-heptose biosynthesis; ADP-L-glycero-beta-D-manno-heptose from D-glycero-beta-D-manno-heptose 7-phosphate: step 1/4. Its pathway is nucleotide-sugar biosynthesis; ADP-L-glycero-beta-D-manno-heptose biosynthesis; ADP-L-glycero-beta-D-manno-heptose from D-glycero-beta-D-manno-heptose 7-phosphate: step 3/4. Catalyzes the phosphorylation of D-glycero-D-manno-heptose 7-phosphate at the C-1 position to selectively form D-glycero-beta-D-manno-heptose-1,7-bisphosphate. Functionally, catalyzes the ADP transfer from ATP to D-glycero-beta-D-manno-heptose 1-phosphate, yielding ADP-D-glycero-beta-D-manno-heptose. This Shewanella loihica (strain ATCC BAA-1088 / PV-4) protein is Bifunctional protein HldE.